We begin with the raw amino-acid sequence, 469 residues long: Glutamate--tRNA ligase (469 aa).

The 'HIGH' region signature appears at proline 9–glycine 19. Zn(2+) contacts are provided by cysteine 98, cysteine 100, cysteine 125, and aspartate 127. Positions lysine 236 to arginine 240 match the 'KMSKS' region motif. Lysine 239 is an ATP binding site.

It belongs to the class-I aminoacyl-tRNA synthetase family. Glutamate--tRNA ligase type 1 subfamily. As to quaternary structure, monomer. Zn(2+) is required as a cofactor.

The protein localises to the cytoplasm. The enzyme catalyses tRNA(Glu) + L-glutamate + ATP = L-glutamyl-tRNA(Glu) + AMP + diphosphate. Its function is as follows. Catalyzes the attachment of glutamate to tRNA(Glu) in a two-step reaction: glutamate is first activated by ATP to form Glu-AMP and then transferred to the acceptor end of tRNA(Glu). The protein is Glutamate--tRNA ligase of Shewanella baltica (strain OS155 / ATCC BAA-1091).